The sequence spans 160 residues: Nucleotide-binding protein Noc_2254 (160 aa).

This sequence belongs to the YajQ family.

Functionally, nucleotide-binding protein. This chain is Nucleotide-binding protein Noc_2254, found in Nitrosococcus oceani (strain ATCC 19707 / BCRC 17464 / JCM 30415 / NCIMB 11848 / C-107).